The chain runs to 868 residues: Leucine--tRNA ligase (868 aa).

The short motif at 42-52 (PYPSGKLHMGH) is the 'HIGH' region element. A 'KMSKS' region motif is present at residues 627–631 (KMSKS). Residue Lys-630 coordinates ATP.

Belongs to the class-I aminoacyl-tRNA synthetase family.

The protein resides in the cytoplasm. The catalysed reaction is tRNA(Leu) + L-leucine + ATP = L-leucyl-tRNA(Leu) + AMP + diphosphate. The polypeptide is Leucine--tRNA ligase (Pseudomonas syringae pv. tomato (strain ATCC BAA-871 / DC3000)).